The chain runs to 500 residues: Small ribosomal subunit protein uS3m (500 aa).

This sequence belongs to the universal ribosomal protein uS3 family.

The protein localises to the mitochondrion. This Prototheca wickerhamii protein is Small ribosomal subunit protein uS3m (RPS3).